We begin with the raw amino-acid sequence, 488 residues long: Kelch-like protein 15 (488 aa).

One can recognise a BTB domain in the interval L31–M98. In terms of domain architecture, BACK spans C133 to K237. Kelch repeat units follow at residues F328–R379, V381–N426, and L428–K473.

Homodimer. Interacts with CUL3.

It is found in the nucleus. It participates in protein modification; protein ubiquitination. Functionally, substrate-specific adapter for CUL3 E3 ubiquitin-protein ligase complex. In Gallus gallus (Chicken), this protein is Kelch-like protein 15 (KLHL15).